The chain runs to 433 residues: Type I acyl-CoA thioesterase mpaH' (433 aa).

Residues 58–246 (HGVGLPKELY…IKALFGTTAD (189 aa)) are abhydrolase domain. Residue Val60 participates in substrate binding. Catalysis depends on Ser139, which acts as the Nucleophile. Residue Phe140 participates in substrate binding. Catalysis depends on residues Asp163 and His365.

This sequence belongs to the AB hydrolase superfamily. MpaH hydrolase family. In terms of assembly, homodimer.

It is found in the peroxisome matrix. It carries out the reaction mycophenolyl-CoA + H2O = mycophenolate + CoA + H(+). The protein operates within secondary metabolite biosynthesis; terpenoid biosynthesis. Functionally, type I acyl-CoA thioesterase; part of the gene cluster that mediates the biosynthesis of mycophenolic acid (MPA), the first isolated antibiotic natural product in the world obtained from a culture of Penicillium brevicompactum in 1893. MpaH' acts as a peroxisomal acyl-CoA hydrolase that converts MPA-CoA into the final product MPA. The first step of the pathway is the synthesis of 5-methylorsellinic acid (5MOA) by the cytosolic polyketide synthase mpaC. 5MOA is then converted to the phthalide compound 5,7-dihydroxy-4,6-dimethylphthalide (DHMP) by the endoplasmic reticulum-bound cytochrome P450 monooxygenase mpaDE. MpaDE first catalyzes hydroxylation of 5-MOA to 4,6-dihydroxy-2-(hydroxymethyl)-3-methylbenzoic acid (DHMB). MpaDE then acts as a lactone synthase that catalyzes the ring closure to convert DHMB into DHMP. The next step is the prenylation of DHMP by the Golgi apparatus-associated prenyltransferase mpaA to yield farnesyl-DHMP (FDHMP). The ER-bound oxygenase mpaB then mediates the oxidative cleavage the C19-C20 double bond in FDHMP to yield FDHMP-3C via a mycophenolic aldehyde intermediate. The O-methyltransferase mpaG catalyzes the methylation of FDHMP-3C to yield MFDHMP-3C. After the cytosolic methylation of FDHMP-3C, MFDHMP-3C enters into peroxisomes probably via free diffusion due to its low molecular weight. Upon a peroxisomal CoA ligation reaction, catalyzed by a beta-oxidation component enzyme acyl-CoA ligase ACL891, MFDHMP-3C-CoA would then be restricted to peroxisomes for the following beta-oxidation pathway steps. The peroxisomal beta-oxidation machinery than converts MFDHMP-3C-CoA into MPA_CoA, via a beta-oxidation chain-shortening process. Finally mpaH acts as a peroxisomal acyl-CoA hydrolase with high substrate specificity toward MPA-CoA to release the final product MPA. This Penicillium brevicompactum protein is Type I acyl-CoA thioesterase mpaH'.